Reading from the N-terminus, the 105-residue chain is Immunoglobulin lambda-like polypeptide 1 (105 aa).

The interval 1–105 (QPKSDPLVTL…EKSVSPAECS (105 aa)) is c region. In terms of domain architecture, Ig-like C1-type spans 6–100 (PLVTLFLPSL…EGNTVEKSVS (95 aa)). The cysteines at positions 27 and 86 are disulfide-linked.

In terms of assembly, associates non-covalently with VPREB1A. Interacts with SYNV1/HRD1 (via N-terminus); this interaction leads to increased IGLL1 ubiquitination and degradation in pre-B cells, possibly through a lysosomal, not proteasomal, pathway.

It is found in the endoplasmic reticulum. The protein resides in the secreted. In terms of biological role, critical for B-cell development. This is Immunoglobulin lambda-like polypeptide 1 (Igll1) from Mus spretus (Western Mediterranean mouse).